Consider the following 781-residue polypeptide: Arf-GAP with coiled-coil, ANK repeat and PH domain-containing protein 2 (781 aa).

One can recognise a BAR domain in the interval 1 to 226 (MKVTVDFEEC…MKDLGAQLDQ (226 aa)). A PH domain is found at 266–361 (GIVMEGYLFK…WIKAVQTSIA (96 aa)). The segment covering 365–378 (REKGDESEKQEKKS) has biased composition (basic and acidic residues). The disordered stretch occupies residues 365–390 (REKGDESEKQEKKSSPSTGSLESGSE). Over residues 379–388 (SPSTGSLESG) the composition is skewed to low complexity. An Arf-GAP domain is found at 399–521 (ESALQRVQCI…KFVEKQPAAA (123 aa)). The segment at 414–437 (CCDCGLADPRWASINLGITLCIEC) adopts a C4-type zinc-finger fold. A disordered region spans residues 520 to 576 (AAVSPLESRTKVLPQSQEEKRHSAPEKSFLAIEQGAASPRVRSSDSGIQQSVDDSRE). ANK repeat units lie at residues 642–671 (NKAT…NVNI), 675–704 (KGRG…NQHA), and 708–737 (DGKD…NEEM).

It localises to the endosome membrane. The protein localises to the cell membrane. GAP activity stimulated by phosphatidylinositol 4,5-bisphosphate (PIP2) and phosphatidic acid. Functionally, GTPase-activating protein (GAP) for ADP ribosylation factor 6 (ARF6). This chain is Arf-GAP with coiled-coil, ANK repeat and PH domain-containing protein 2 (ACAP2), found in Gallus gallus (Chicken).